The primary structure comprises 160 residues: Bcl-2-like gene 16 protein (160 aa).

The short motif at 64–84 is the BH1 element; the sequence is LLTTEHTTNWGKVVAMLSFSA.

It belongs to the Bcl-2 family.

In Saimiri sciureus (Common squirrel monkey), this protein is Bcl-2-like gene 16 protein (16).